The following is a 131-amino-acid chain: Small ribosomal subunit protein uS8 (131 aa).

The protein belongs to the universal ribosomal protein uS8 family. Part of the 30S ribosomal subunit. Contacts proteins S5 and S12.

In terms of biological role, one of the primary rRNA binding proteins, it binds directly to 16S rRNA central domain where it helps coordinate assembly of the platform of the 30S subunit. The chain is Small ribosomal subunit protein uS8 from Burkholderia lata (strain ATCC 17760 / DSM 23089 / LMG 22485 / NCIMB 9086 / R18194 / 383).